Reading from the N-terminus, the 127-residue chain is Large ribosomal subunit protein eL8 (127 aa).

This sequence belongs to the eukaryotic ribosomal protein eL8 family. Part of the 50S ribosomal subunit. Probably part of the RNase P complex.

It localises to the cytoplasm. In terms of biological role, multifunctional RNA-binding protein that recognizes the K-turn motif in ribosomal RNA, the RNA component of RNase P, box H/ACA, box C/D and box C'/D' sRNAs. The chain is Large ribosomal subunit protein eL8 from Saccharolobus islandicus (strain Y.N.15.51 / Yellowstone #2) (Sulfolobus islandicus).